We begin with the raw amino-acid sequence, 233 residues long: Low affinity immunoglobulin gamma Fc region receptor III-B (233 aa).

An N-terminal signal peptide occupies residues 1 to 16 (MWQLLLPTALLLLVSA). Ig-like C2-type domains are found at residues 40 to 96 (KDSV…LSTL) and 121 to 179 (EDPI…VGSK). A disulfide bond links Cys-47 and Cys-89. 4 N-linked (GlcNAc...) asparagine glycosylation sites follow: Asn-56, Asn-63, Asn-82, and Asn-92. The cysteines at positions 128 and 172 are disulfide-linked. Asn-180 and Asn-187 each carry an N-linked (GlcNAc...) asparagine glycan. Ser-200 carries the GPI-anchor amidated serine lipid modification. Positions 201 to 233 (SFSPPGYQVSFCLVMVLLFAVDTGLYFSVKTNI) are cleaved as a propeptide — removed in mature form.

Monomer. Interacts with INPP5D/SHIP1. In terms of processing, glycosylated. Glycosylation plays an inhibitory role in the interaction with IgG3. The soluble form is produced by a proteolytic cleavage. In terms of tissue distribution, expressed specifically by polymorphonuclear leukocytes (neutrophils). Also expressed by stimulated eosinophils.

The protein resides in the cell membrane. The protein localises to the secreted. Receptor for the Fc region of immunoglobulins gamma. Low affinity receptor. Binds complexed or aggregated IgG and also monomeric IgG. Contrary to III-A, is not capable to mediate antibody-dependent cytotoxicity and phagocytosis. May serve as a trap for immune complexes in the peripheral circulation which does not activate neutrophils. The protein is Low affinity immunoglobulin gamma Fc region receptor III-B (FCGR3B) of Homo sapiens (Human).